The sequence spans 219 residues: Elongation factor Ts (219 aa).

Positions 82-85 (TDFV) are involved in Mg(2+) ion dislocation from EF-Tu.

The protein belongs to the EF-Ts family.

It localises to the cytoplasm. Its function is as follows. Associates with the EF-Tu.GDP complex and induces the exchange of GDP to GTP. It remains bound to the aminoacyl-tRNA.EF-Tu.GTP complex up to the GTP hydrolysis stage on the ribosome. The sequence is that of Elongation factor Ts from Anaeromyxobacter dehalogenans (strain 2CP-1 / ATCC BAA-258).